A 229-amino-acid chain; its full sequence is Transmembrane protein 182 (229 aa).

The signal sequence occupies residues 1–26 (MRLNIAIFFGALFGALGVLLFLVAFG). The Extracellular portion of the chain corresponds to 27–114 (SDYWLLATEV…SYDSAVIYRG (88 aa)). N-linked (GlcNAc...) asparagine glycosylation occurs at N47. Residues 49–59 (TFHHEGFFWRC) form an interaction with ITGB1 region. The N-linked (GlcNAc...) asparagine glycan is linked to N102. A helical transmembrane segment spans residues 115–135 (FWAVLMLLGVVAVVIASFLII). Residues 136–153 (CAAPFASHFLYKAGGGSY) are Cytoplasmic-facing. The chain crosses the membrane as a helical span at residues 154 to 174 (IAAGILFSLVVMLYVIWVQAV). Residues 175 to 200 (ADMESYRNMKMKDCLDFTPSVLYGWS) are Extracellular-facing. A helical membrane pass occupies residues 201–221 (FFLAPAGIFFSLLAGLLFLVV). The Cytoplasmic portion of the chain corresponds to 222–229 (GWHIQIHH).

The protein belongs to the TMEM182 family. As to quaternary structure, interacts with ITGB1.

The protein localises to the cell membrane. Negatively regulates myogenesis and skeletal muscle regeneration via its association with ITGB1. Modulates ITGB1 activation by decreasing ITGB1-LAMB1 interaction and inhibiting ITGB1-mediated intracellular signaling during myogenesis. The protein is Transmembrane protein 182 (TMEM182) of Homo sapiens (Human).